The sequence spans 430 residues: Serine--tRNA ligase (430 aa).

An L-serine-binding site is contributed by 237-239; that stretch reads TAE. 268–270 provides a ligand contact to ATP; the sequence is RSE. Position 291 (glutamate 291) interacts with L-serine. 355 to 358 is an ATP binding site; the sequence is EISS. L-serine is bound at residue serine 391.

This sequence belongs to the class-II aminoacyl-tRNA synthetase family. Type-1 seryl-tRNA synthetase subfamily. In terms of assembly, homodimer. The tRNA molecule binds across the dimer.

The protein resides in the cytoplasm. It carries out the reaction tRNA(Ser) + L-serine + ATP = L-seryl-tRNA(Ser) + AMP + diphosphate + H(+). It catalyses the reaction tRNA(Sec) + L-serine + ATP = L-seryl-tRNA(Sec) + AMP + diphosphate + H(+). The protein operates within aminoacyl-tRNA biosynthesis; selenocysteinyl-tRNA(Sec) biosynthesis; L-seryl-tRNA(Sec) from L-serine and tRNA(Sec): step 1/1. Functionally, catalyzes the attachment of serine to tRNA(Ser). Is also able to aminoacylate tRNA(Sec) with serine, to form the misacylated tRNA L-seryl-tRNA(Sec), which will be further converted into selenocysteinyl-tRNA(Sec). The chain is Serine--tRNA ligase from Escherichia fergusonii (strain ATCC 35469 / DSM 13698 / CCUG 18766 / IAM 14443 / JCM 21226 / LMG 7866 / NBRC 102419 / NCTC 12128 / CDC 0568-73).